Consider the following 211-residue polypeptide: FMN-dependent NADH:quinone oxidoreductase (211 aa).

FMN is bound by residues Ser-10 and 16-18; that span reads STS.

It belongs to the azoreductase type 1 family. In terms of assembly, homodimer. Requires FMN as cofactor.

It catalyses the reaction 2 a quinone + NADH + H(+) = 2 a 1,4-benzosemiquinone + NAD(+). The enzyme catalyses N,N-dimethyl-1,4-phenylenediamine + anthranilate + 2 NAD(+) = 2-(4-dimethylaminophenyl)diazenylbenzoate + 2 NADH + 2 H(+). Quinone reductase that provides resistance to thiol-specific stress caused by electrophilic quinones. Functionally, also exhibits azoreductase activity. Catalyzes the reductive cleavage of the azo bond in aromatic azo compounds to the corresponding amines. The polypeptide is FMN-dependent NADH:quinone oxidoreductase (Frankia casuarinae (strain DSM 45818 / CECT 9043 / HFP020203 / CcI3)).